The sequence spans 173 residues: uncharacterized protein (173 aa).

An MSP domain is found at 16-133 (DLVLRPETIT…KHVLIRFPNK (118 aa)). The segment covering 141–163 (KKMEEDDMKQQKERNKLSNEKMG) has biased composition (basic and acidic residues). The tract at residues 141 to 173 (KKMEEDDMKQQKERNKLSNEKMGIRNQNMGEKK) is disordered.

This is an uncharacterized protein from Caenorhabditis elegans.